The chain runs to 253 residues: MSLALGHGTIAGSTAAPLSEEGEVTSGLQALAVEDTGGPSVSASKAEEEGKGSQEEAGREGSRPEEALEAPSAASDERAEGEAEDWCVPCSDEEVELPANGQSWMPPPSEIQRLYELLATQGTLELQAEILPRRPPTPEAQSEEERSDEEPEAKEEEEEKPHMPTEFDFDDEPMTPKDSLIDRRRTPGSSARSQKREARLDKVLSDMKRHKKLEEQILRTGRDLFSLDSEGPSPTSPPLRSSGNSLFPRQRKY.

Disordered stretches follow at residues 1-108 and 126-253; these read MSLA…MPPP and LQAE…QRKY. Over residues 45–66 the composition is skewed to basic and acidic residues; sequence KAEEEGKGSQEEAGREGSRPEE. Residues 115–159 are sufficient for interaction with NCOA1; the sequence is YELLATQGTLELQAEILPRRPPTPEAQSEEERSDEEPEAKEEEEE. A Phosphothreonine modification is found at Thr137. The segment covering 141–158 has biased composition (acidic residues); sequence QSEEERSDEEPEAKEEEE. Phosphoserine occurs at positions 142 and 147. The sufficient for interaction with ESR1 stretch occupies residues 160–253; the sequence is KPHMPTEFDF…NSLFPRQRKY (94 aa). Residues 194-222 show a composition bias toward basic and acidic residues; sequence QKREARLDKVLSDMKRHKKLEEQILRTGR. Residue Ser236 is modified to Phosphoserine. Over residues 238 to 247 the composition is skewed to polar residues; the sequence is PLRSSGNSLF.

Component of the KMT2 family MLL2/MLL3 complex, at least composed of the histone methyltransferases KMT2D and/or KMT2C, the common subunits ASH2L, RBBP5, WDR5 and DPY30, and the complex type-specific subunits PAXIP1/PTIP, PAGR1, NCOA6 and KDM6A; PAXIP1 is required for the association with the MLL2/MLL3 complex. Forms a constitutive complex with PAXIP1/PTIP independently of the MLL2/MLL3 complex. Interacts with NCOA1, ESR1, NR3C1, AR.

The protein resides in the nucleus. Functionally, its association with the histone methyltransferase MLL2/MLL3 complex is suggesting a role in epigenetic transcriptional activation. However, in association with PAXIP1/PTIP is proposed to function at least in part independently of the MLL2/MLL3 complex. Proposed to be recruited by PAXIP1 to sites of DNA damage where the PAGR1:PAXIP1 complex is required for cell survival in response to DNA damage independently of the MLL2/MLL3 complex. However, its function in DNA damage has been questioned. During immunoglobulin class switching in activated B-cells is involved in transcription regulation of downstream switch regions at the immunoglobulin heavy-chain (Igh) locus independently of the MLL2/MLL3 complex. Involved in both estrogen receptor-regulated gene transcription and estrogen-stimulated G1/S cell-cycle transition. Acts as a transcriptional cofactor for nuclear hormone receptors. Inhibits the induction properties of several steroid receptors such as NR3C1, AR and PPARG; the mechanism of inhibition appears to be gene-dependent. May be involved in the regulation of the BMP pathway in extraembryonic development. In Mus musculus (Mouse), this protein is PAXIP1-associated glutamate-rich protein 1A.